The following is a 151-amino-acid chain: Sec-independent protein translocase protein TatB (151 aa).

The helical transmembrane segment at 1–21 (MFDIGFLELLICGVIALLVLG) threads the bilayer. 2 stretches are compositionally biased toward basic and acidic residues: residues 87-99 (KYEH…DQTR) and 122-132 (EPPHEPVRDEA). The interval 87–151 (KYEHMILPDD…SPTSPSDKYS (65 aa)) is disordered. Over residues 134–151 (ASDQPSDSSPTSPSDKYS) the composition is skewed to low complexity.

The protein belongs to the TatB family. As to quaternary structure, the Tat system comprises two distinct complexes: a TatABC complex, containing multiple copies of TatA, TatB and TatC subunits, and a separate TatA complex, containing only TatA subunits. Substrates initially bind to the TatABC complex, which probably triggers association of the separate TatA complex to form the active translocon.

Its subcellular location is the cell inner membrane. Its function is as follows. Part of the twin-arginine translocation (Tat) system that transports large folded proteins containing a characteristic twin-arginine motif in their signal peptide across membranes. Together with TatC, TatB is part of a receptor directly interacting with Tat signal peptides. TatB may form an oligomeric binding site that transiently accommodates folded Tat precursor proteins before their translocation. The polypeptide is Sec-independent protein translocase protein TatB (Marinobacter nauticus (strain ATCC 700491 / DSM 11845 / VT8) (Marinobacter aquaeolei)).